The primary structure comprises 273 residues: MLTAHHLDVARRHNVILRDLSLSIEPGRVTALLGRNGAGKSTLLKTFAGELTGSVAPNGVRVTGDITLNGEPLACIDARRLACLRAVLPQAAQPAFPFSVDEIVLLGRYPHVRRGGATSHRDRDIAWQALERADADALVGRDVTTLSGGELARVQFARVLAQLWPDDDAMEAGPRYLLLDEPTAALDLAHQHRLLDTVRAVAREWRLGVLAIVHDPNLAARHADSIALLADGTIVAHGTPRDVMTPAHIAQCYGFAVKMVETGDGAPPVMVPA.

In terms of domain architecture, ABC transporter spans 2 to 256 (LTAHHLDVAR…AHIAQCYGFA (255 aa)). 34-41 (GRNGAGKS) lines the ATP pocket.

Belongs to the ABC transporter superfamily. Heme (hemin) importer (TC 3.A.1.14.5) family. As to quaternary structure, the complex is composed of two ATP-binding proteins (HmuV), two transmembrane proteins (HmuU) and a solute-binding protein (HmuT).

The protein localises to the cell inner membrane. Functionally, part of the ABC transporter complex HmuTUV involved in hemin import. Responsible for energy coupling to the transport system. This Burkholderia ambifaria (strain ATCC BAA-244 / DSM 16087 / CCUG 44356 / LMG 19182 / AMMD) (Burkholderia cepacia (strain AMMD)) protein is Hemin import ATP-binding protein HmuV.